Here is a 375-residue protein sequence, read N- to C-terminus: 23S rRNA (uracil(747)-C(5))-methyltransferase RlmC (375 aa).

The [4Fe-4S] cluster site is built by C3, C11, C14, and C87. Q212, F241, E262, and N307 together coordinate S-adenosyl-L-methionine. The Nucleophile role is filled by C334.

The protein belongs to the class I-like SAM-binding methyltransferase superfamily. RNA M5U methyltransferase family. RlmC subfamily.

The catalysed reaction is uridine(747) in 23S rRNA + S-adenosyl-L-methionine = 5-methyluridine(747) in 23S rRNA + S-adenosyl-L-homocysteine + H(+). Functionally, catalyzes the formation of 5-methyl-uridine at position 747 (m5U747) in 23S rRNA. The protein is 23S rRNA (uracil(747)-C(5))-methyltransferase RlmC of Escherichia coli O45:K1 (strain S88 / ExPEC).